A 1063-amino-acid polypeptide reads, in one-letter code: Lysine-specific demethylase phf2 (1063 aa).

The PHD-type zinc-finger motif lies at 5–56 (PVYCICRLPYDVTQFMIECDACKDWFHGSCVGVDEDEAPDIDIYHCPNCEKT). A JmjC domain is found at 197 to 353 (FSDARMANIV…MQMRAYEVEK (157 aa)). Threonine 246 is a binding site for 2-oxoglutarate. The Fe cation site is built by histidine 249 and glutamate 251. Tyrosine 259 and lysine 266 together coordinate 2-oxoglutarate. Asparagine 321 is a binding site for Fe cation. 4 disordered regions span residues 448 to 546 (VSDS…LAAL), 704 to 761 (NIKE…SAGI), 773 to 864 (GIDY…DMFD), and 879 to 1045 (YVYP…MATA). A compositionally biased stretch (low complexity) spans 460–477 (SEPSNSKPPAEEPPSALS). 2 stretches are compositionally biased toward basic and acidic residues: residues 513 to 540 (PPKE…EKKP) and 723 to 745 (KSPD…DVKG). A compositionally biased stretch (basic residues) spans 746–755 (RNSKVSKKKG). Over residues 776–791 (YSNNSQPPASPSTQEA) the composition is skewed to polar residues. Low complexity predominate over residues 813–833 (SNSQAKNNSHSSAASKKPSGA). A compositionally biased stretch (basic residues) spans 842-852 (RPAKRLPKKTQ). Positions 920–929 (RQERPAREGA) are enriched in basic and acidic residues. Basic residues predominate over residues 953 to 964 (IKKKKKSAKKKP). Over residues 965 to 975 (IVAEESHKLSH) the composition is skewed to basic and acidic residues. Low complexity-rich tracts occupy residues 976–988 (DSSS…DSES) and 1021–1031 (SSSSSSQNASS). The residue at position 1021 (serine 1021) is a Phosphoserine; by PKA.

It belongs to the JHDM1 histone demethylase family. JHDM1D subfamily.

The protein localises to the nucleus. It is found in the nucleolus. The protein resides in the chromosome. It localises to the centromere. Its subcellular location is the kinetochore. Lysine demethylase that demethylates both histones and non-histone proteins. Mediates demethylation of dimethylated 'Lys-9' of histone H3 (H3K9me2). Recruited to trimethylated 'Lys-4' of histone H3 (H3K4me3) at rDNA promoters and promotes expression of rDNA. This Danio rerio (Zebrafish) protein is Lysine-specific demethylase phf2 (phf2).